Consider the following 445-residue polypeptide: Phosphoglucosamine mutase (445 aa).

Serine 99 acts as the Phosphoserine intermediate in catalysis. Positions 99, 242, 244, and 246 each coordinate Mg(2+). Position 99 is a phosphoserine (serine 99).

It belongs to the phosphohexose mutase family. It depends on Mg(2+) as a cofactor. In terms of processing, activated by phosphorylation.

It catalyses the reaction alpha-D-glucosamine 1-phosphate = D-glucosamine 6-phosphate. Catalyzes the conversion of glucosamine-6-phosphate to glucosamine-1-phosphate. The polypeptide is Phosphoglucosamine mutase (Campylobacter jejuni subsp. jejuni serotype O:6 (strain 81116 / NCTC 11828)).